We begin with the raw amino-acid sequence, 339 residues long: Methionine import ATP-binding protein MetN 2 (339 aa).

An ABC transporter domain is found at 2–241 (ISFNNVSKVY…PKTTTTQNFV (240 aa)). 38-45 (GFSGAGKS) lines the ATP pocket.

The protein belongs to the ABC transporter superfamily. Methionine importer (TC 3.A.1.24) family. The complex is composed of two ATP-binding proteins (MetN), two transmembrane proteins (MetI) and a solute-binding protein (MetQ).

The protein localises to the cell membrane. The catalysed reaction is L-methionine(out) + ATP + H2O = L-methionine(in) + ADP + phosphate + H(+). The enzyme catalyses D-methionine(out) + ATP + H2O = D-methionine(in) + ADP + phosphate + H(+). In terms of biological role, part of the ABC transporter complex MetNIQ involved in methionine import. Responsible for energy coupling to the transport system. This chain is Methionine import ATP-binding protein MetN 2, found in Bacillus anthracis.